A 1314-amino-acid polypeptide reads, in one-letter code: Angiotensin-converting enzyme (1314 aa).

The N-terminal stretch at 1–35 (MGAASGQRGQGPPSPLLLLWLSLLLLLLPPSPAPA) is a signal peptide. Topologically, residues 36–1265 (LDPGLQPGNF…LEPQQARVGQ (1230 aa)) are extracellular. N-linked (GlcNAc...) asparagine glycans are attached at residues N44, N60, N80, N117, and N166. 2 Peptidase M2 domains span residues 46 to 630 (SADE…LGWP) and 649 to 1228 (VTDE…LGWP). An intrachain disulfide couples C163 to C171. Y237 serves as a coordination point for chloride. The N-linked (GlcNAc...) asparagine glycan is linked to N324. C365 and C383 are oxidised to a cystine. H396 contacts Zn(2+). Catalysis depends on E397, which acts as the Proton acceptor 1. Zn(2+) is bound by residues H400 and E424. N515 carries an N-linked (GlcNAc...) asparagine glycan. H526 acts as the Proton donor 1 in catalysis. Residue R535 participates in chloride binding. A disulfide bridge links C551 with C563. N-linked (GlcNAc...) asparagine glycans are attached at residues N683, N701, N720, and N766. Cysteines 763 and 769 form a disulfide. 2 residues coordinate chloride: R797 and Y835. Residue N948 is glycosylated (N-linked (GlcNAc...) asparagine). The cysteines at positions 963 and 981 are disulfide-linked. H994 serves as a coordination point for Zn(2+). The Proton acceptor 2 role is filled by E995. Positions 998 and 1022 each coordinate Zn(2+). 2 residues coordinate chloride: W1096 and R1100. H1124 (proton donor 2) is an active-site residue. R1133 is a binding site for chloride. C1149 and C1161 are oxidised to a cystine. A glycan (N-linked (GlcNAc...) asparagine) is linked at N1197. Residues 1221 to 1262 (HGETLGWPEYNWTPNTARSEGPFPESGRVNFLGMYLEPQQAR) form a juxtamembrane stalk region. A helical membrane pass occupies residues 1266–1282 (WVLLFLGVSLLVATLGL). Over 1283-1314 (THRLFSIRQHGHSLHRPHRGPQFGSEVELRHS) the chain is Cytoplasmic. A disordered region spans residues 1293–1314 (GHSLHRPHRGPQFGSEVELRHS). Position 1307 is a phosphoserine (S1307).

It belongs to the peptidase M2 family. In terms of assembly, monomer and homodimer; homodimerizes following binding to an inhibitor. Interacts with calmodulin (CALM1, CALM2 or CALM3); interaction takes place in the cytoplasmic region and regulates phosphorylation and proteolytic cleavage. The cofactor is Zn(2+). Chloride serves as cofactor. Post-translationally, produced following proteolytic cleavage by secretase enzymes that cleave the transmembrane form in the juxtamembrane stalk region upstream of the transmembrane region. Cleavage can take place at different sites of the juxtamembrane stalk region. Phosphorylated by CK2 on Ser-1307; which allows membrane retention. Phosphorylated on tyrosine residues on its extracellular part, promoting cleavage by secretase enzymes and formation of the soluble form (Angiotensin-converting enzyme, soluble form). Widely expressed with dominant expression in lung and kidney.

Its subcellular location is the cell membrane. The protein localises to the cytoplasm. It is found in the secreted. It catalyses the reaction Release of a C-terminal dipeptide, oligopeptide-|-Xaa-Yaa, when Xaa is not Pro, and Yaa is neither Asp nor Glu. Thus, conversion of angiotensin I to angiotensin II, with increase in vasoconstrictor activity, but no action on angiotensin II.. The catalysed reaction is angiotensin I + H2O = L-histidyl-L-leucine + angiotensin II. It carries out the reaction bradykinin + H2O = L-Phe-L-Arg + bradykinin(1-7). The enzyme catalyses substance P + H2O = substance P(1-9) + L-Leu-L-Met-NH2. It catalyses the reaction substance P + H2O = substance P(1-8) + Gly-L-Leu-L-Met-NH2. The catalysed reaction is substance P + H2O = L-Phe-L-Phe-Gly-L-Leu-L-Met-NH2 + substance P(1-6). It carries out the reaction neurotensin + H2O = neurotensin(1-11) + L-isoleucyl-L-leucine. The enzyme catalyses goralatide + H2O = N-acetyl-L-seryl-L-aspartate + L-lysyl-L-proline. It catalyses the reaction Met-enkephalin + H2O = L-phenylalanyl-L-methionine + L-tyrosylglycylglycine. The catalysed reaction is Leu-enkephalin + H2O = L-tyrosylglycylglycine + L-phenylalanyl-L-leucine. It carries out the reaction Met-enkephalin-Arg-Phe + H2O = L-arginyl-L-phenylalanine + Met-enkephalin. The dipeptidyl carboxypeptidase activity is strongly activated by chloride. The dipeptidyl carboxypeptidase activity is specifically inhibited by lisinopril, captopril and enalaprilat. Its activity is regulated as follows. Strongly inhibited by lisinopril and captopril. Functionally, dipeptidyl carboxypeptidase that removes dipeptides from the C-terminus of a variety of circulating hormones, such as angiotensin I, bradykinin or enkephalins, thereby playing a key role in the regulation of blood pressure, electrolyte homeostasis or synaptic plasticity. Composed of two similar catalytic domains, each possessing a functional active site, with different selectivity for substrates. Plays a major role in the angiotensin-renin system that regulates blood pressure and sodium retention by the kidney by converting angiotensin I to angiotensin II, resulting in an increase of the vasoconstrictor activity of angiotensin. Also able to inactivate bradykinin, a potent vasodilator, and therefore enhance the blood pressure response. Acts as a regulator of synaptic transmission by mediating cleavage of neuropeptide hormones, such as substance P, neurotensin or enkephalins. Catalyzes degradation of different enkephalin neuropeptides (Met-enkephalin, Leu-enkephalin, Met-enkephalin-Arg-Phe and possibly Met-enkephalin-Arg-Gly-Leu). Acts as a regulator of synaptic plasticity in the nucleus accumbens of the brain by mediating cleavage of Met-enkephalin-Arg-Phe, a strong ligand of Mu-type opioid receptor OPRM1, into Met-enkephalin. Met-enkephalin-Arg-Phe cleavage by ACE decreases activation of OPRM1, leading to long-term synaptic potentiation of glutamate release. Also acts as a regulator of hematopoietic stem cell differentiation by mediating degradation of hemoregulatory peptide N-acetyl-SDKP (AcSDKP). Acts as a regulator of cannabinoid signaling pathway by mediating degradation of hemopressin, an antagonist peptide of the cannabinoid receptor CNR1. Involved in amyloid-beta metabolism by catalyzing degradation of Amyloid-beta protein 40 and Amyloid-beta protein 42 peptides, thereby preventing plaque formation. Catalyzes cleavage of cholecystokinin (maturation of Cholecystokinin-8 and Cholecystokinin-5) and Gonadoliberin-1 (both maturation and degradation) hormones. Degradation of hemoregulatory peptide N-acetyl-SDKP (AcSDKP) and amyloid-beta proteins is mediated by the N-terminal catalytic domain, while angiotensin I and cholecystokinin cleavage is mediated by the C-terminal catalytic region. Its function is as follows. Soluble form that is released in blood plasma and other body fluids following proteolytic cleavage in the juxtamembrane stalk region. Isoform produced by alternative promoter usage that is specifically expressed in spermatocytes and adult testis, and which is required for male fertility. In contrast to somatic isoforms, only contains one catalytic domain. Acts as a dipeptidyl carboxypeptidase that removes dipeptides from the C-terminus of substrates. The identity of substrates that are needed for male fertility is unknown. May also have a glycosidase activity which releases GPI-anchored proteins from the membrane by cleaving the mannose linkage in the GPI moiety. The GPIase activity was reported to be essential for the egg-binding ability of the sperm. This activity is however unclear and has been challenged by other groups, suggesting that it may be indirect. This Mesocricetus auratus (Golden hamster) protein is Angiotensin-converting enzyme.